We begin with the raw amino-acid sequence, 608 residues long: Isoprene synthase, chloroplastic (608 aa).

The N-terminal 45 residues, 1–45 (MATNLLCLSNKLSSPTPTPSTRFPQSKNFITQKTSLANPKPWRVI), are a transit peptide targeting the chloroplast. D350 contributes to the dimethylallyl diphosphate binding site. Residues D350 and D354 each contribute to the Mg(2+) site. The short motif at 350–354 (DDVYD) is the DDXXD motif element. E428, R494, and N497 together coordinate dimethylallyl diphosphate. Residues N497, T501, and E505 each contribute to the Mg(2+) site.

Belongs to the terpene synthase family. Tpsb subfamily. Mg(2+) is required as a cofactor. Requires Mn(2+) as cofactor.

The protein localises to the plastid. The protein resides in the chloroplast. It carries out the reaction dimethylallyl diphosphate = isoprene + diphosphate. In terms of biological role, lyase that catalyzes the formation of isoprene from dimethylallyl diphosphate. The polypeptide is Isoprene synthase, chloroplastic (ISPS) (Pueraria montana var. lobata (Kudzu vine)).